Reading from the N-terminus, the 147-residue chain is Epididymal secretory protein E3-beta (147 aa).

A signal peptide spans 1 to 25 (MASSLKIWGTLLALLCILCTLLVQS).

In terms of tissue distribution, epididymis.

The protein localises to the secreted. Possible function in sperm maturation. The protein is Epididymal secretory protein E3-beta (EDDM3B) of Homo sapiens (Human).